The chain runs to 756 residues: Tubulin glycylase 3B (756 aa).

A disordered region spans residues 104 to 123; sequence TPLPRTVTSSPTAPEAQKRQ. The 358-residue stretch at 272 to 629 folds into the TTL domain; the sequence is LEERMAFIED…DLPKNPTAAT (358 aa). ATP-binding positions include 440 to 443, Lys-453, and Asp-455; that span reads QKYI. Residues 709–736 are disordered; it reads ITKKKKLSASAGSSTAASAQPSTQNLTT. Low complexity predominate over residues 716 to 727; it reads SASAGSSTAASA.

Its subcellular location is the cytoplasm. It is found in the cytoskeleton. It localises to the nucleus. Its function is as follows. Essential glycylase which modifies both tubulin and non-tubulin proteins, generating side chains of glycine on the gamma-carboxyl groups of specific glutamate residues of target proteins. Monoglycylates alpha-tubulin by adding a single glycine chain to generate monoglycine side chains, but is not involved in elongation step to generate polyglycine side chains on alpha-tubulin. Has the ability to both mono- and polyglycylate non-tubulin proteins such as up (Troponin T). Required for early steps of spermatogenesis. This is Tubulin glycylase 3B (TTLL3B) from Drosophila melanogaster (Fruit fly).